Reading from the N-terminus, the 286-residue chain is 4-hydroxybenzoate octaprenyltransferase (286 aa).

The next 8 helical transmembrane spans lie at 20–40, 43–63, 96–116, 142–162, 167–187, 210–230, 235–255, and 266–286; these read IGTL…AGGM, LKVL…GCII, LFVI…GLVV, FLGV…TGEV, WWLF…YAMV, QIIG…GWSA, VYGL…MLIF, and FLNN…DYLF.

This sequence belongs to the UbiA prenyltransferase family. Mg(2+) is required as a cofactor.

The protein localises to the cell inner membrane. The catalysed reaction is all-trans-octaprenyl diphosphate + 4-hydroxybenzoate = 4-hydroxy-3-(all-trans-octaprenyl)benzoate + diphosphate. It participates in cofactor biosynthesis; ubiquinone biosynthesis. Catalyzes the prenylation of para-hydroxybenzoate (PHB) with an all-trans polyprenyl group. Mediates the second step in the final reaction sequence of ubiquinone-8 (UQ-8) biosynthesis, which is the condensation of the polyisoprenoid side chain with PHB, generating the first membrane-bound Q intermediate 3-octaprenyl-4-hydroxybenzoate. The sequence is that of 4-hydroxybenzoate octaprenyltransferase from Shewanella oneidensis (strain ATCC 700550 / JCM 31522 / CIP 106686 / LMG 19005 / NCIMB 14063 / MR-1).